Reading from the N-terminus, the 169-residue chain is MLIYKDILTGDEIISDSYNLKEIDGVVYEADCTKITVGGESFDTGANASAEEQEEGAEDSAETKIDVVYSFRLNETGFDKKGYLTYLKGYMKAVKDGLKKKGADEATIKDFETKASGYAKKIISNFKDYEFFTGESMNPDGMIVLLNYREDGVTPYVTVWKHGLEEMKV.

In terms of domain architecture, TCTP spans 1 to 169 (MLIYKDILTG…WKHGLEEMKV (169 aa)).

It belongs to the TCTP family.

It localises to the cytoplasm. Its subcellular location is the cytoskeleton. Its function is as follows. Involved in protein synthesis. Involved in microtubule stabilization. The chain is Translationally-controlled tumor protein homolog from Alternaria alternata (Alternaria rot fungus).